The following is a 120-amino-acid chain: Protein FAM241B (120 aa).

Positions 12–59 are disordered; sequence QDDDPRVRTTTQHRSSSSQQGFFNRGHGAPPGGPGPRQQQAGARLGAA. 2 stretches are compositionally biased toward low complexity: residues 19-39 and 47-59; these read RTTT…RGHG and PRQQ…LGAA. Ser61 bears the Phosphoserine mark. The chain crosses the membrane as a helical span at residues 91–111; that stretch reads ILLLFLLMMLGVRGLLLVGLV.

Belongs to the FAM241 family.

It is found in the membrane. Its function is as follows. May play a role in lysosome homeostasis. The polypeptide is Protein FAM241B (Mus musculus (Mouse)).